The primary structure comprises 312 residues: R2-like ligand binding oxidase (312 aa).

3 residues coordinate Mn(2+): E68, E101, and H104. The segment at residues 71-162 (VTQDIQPFMA…AAQVRASATY (92 aa)) is a cross-link (3-(O4'-tyrosyl)-valine (Val-Tyr)). Residue E101 coordinates Fe cation. Fe cation is bound by residues E167, E202, and H205.

It belongs to the ribonucleoside diphosphate reductase small chain family. R2-like ligand binding oxidase subfamily. Homodimer. The cofactor is Fe cation. Mn(2+) is required as a cofactor.

In terms of biological role, probable oxidase that might be involved in lipid metabolism. This chain is R2-like ligand binding oxidase, found in Mycobacterium sp. (strain JLS).